Reading from the N-terminus, the 1116-residue chain is Surface layer protein (1116 aa).

An N-terminal signal peptide occupies residues 1–53; the sequence is MQDSGFKKKDRSTNIPQEQFVYTRGGEHKVMKKVVNSVLASALAITVAPMAFA. 3 SLH domains span residues 54–117, 118–181, and 182–231; these read AEDT…KLAQ, FNTT…RGVW, and PNSM…YGTD.

The protein resides in the secreted. The protein localises to the cell wall. It is found in the S-layer. This Brevibacillus choshinensis protein is Surface layer protein.